The primary structure comprises 255 residues: Octanoyltransferase (255 aa).

Residues 1 to 21 (MCATPVSPSPESPRSAQAGAA) are disordered. The 187-residue stretch at 56–242 (FETSDEIWLV…SLIANIDGIP (187 aa)) folds into the BPL/LPL catalytic domain. Substrate-binding positions include 96–103 (RGGQITYH), 173–175 (ALG), and 186–188 (GVS). The active-site Acyl-thioester intermediate is the cysteine 204.

Belongs to the LipB family.

The protein localises to the cytoplasm. The enzyme catalyses octanoyl-[ACP] + L-lysyl-[protein] = N(6)-octanoyl-L-lysyl-[protein] + holo-[ACP] + H(+). The protein operates within protein modification; protein lipoylation via endogenous pathway; protein N(6)-(lipoyl)lysine from octanoyl-[acyl-carrier-protein]: step 1/2. Its function is as follows. Catalyzes the transfer of endogenously produced octanoic acid from octanoyl-acyl-carrier-protein onto the lipoyl domains of lipoate-dependent enzymes. Lipoyl-ACP can also act as a substrate although octanoyl-ACP is likely to be the physiological substrate. In Paraburkholderia phymatum (strain DSM 17167 / CIP 108236 / LMG 21445 / STM815) (Burkholderia phymatum), this protein is Octanoyltransferase.